A 31-amino-acid chain; its full sequence is Sarcolipin (31 aa).

The Cytoplasmic segment spans residues 1–7; the sequence is MERSTRE. The chain crosses the membrane as a helical span at residues 8-26; it reads LCLNFTVVLITVILIWLLV. Topologically, residues 27–31 are lumenal; it reads RSYQY.

It belongs to the sarcolipin family. In terms of assembly, homooligomer. Can also form heterooligomers with other sarcoplasmic/endoplasmic reticulum calcium ATPase (SERCA) regulators ARLN, ERLN, PLN and STRIT1/DWORF. Monomer. Interacts with calcium ATPase ATP2A1/SERCA1. Interacts as a monomer with ATP2A2/SERCA2; the interaction decreases ATP2A2 Ca(2+) affinity. Interacts with VMP1; VMP1 competes with PLN and SLN to prevent them from forming an inhibitory complex with ATP2A2. In terms of tissue distribution, skeletal muscle (at protein level).

Its subcellular location is the sarcoplasmic reticulum membrane. It localises to the endoplasmic reticulum membrane. In terms of biological role, reversibly inhibits the activity of ATP2A1/SERCA1 and ATP2A2/SERCA2 in sarcoplasmic reticulum by decreasing the apparent affinity of the ATPase for Ca(2+). Also inhibits the activity of ATP2A3/SERCA3. Modulates calcium re-uptake during muscle relaxation and plays an important role in calcium homeostasis in muscle. Required for muscle-based, non-shivering thermogenesis. The polypeptide is Sarcolipin (SLN) (Oryctolagus cuniculus (Rabbit)).